The sequence spans 354 residues: MGKLVALTLLGACLALIGERLLNFRERVSTTREIKATEPQNCHLIEGLENGSEDIDILPSGLAFISTGLKYPGMPAFAPDKPGRIFLMDLNEQNPEAQALEISGGLDQESLNPHGISTFIDKDNTAYLYVVNHPNMDSTVEIFKFEEQQRSLIHLKTLKHELLKSVNDIVVLGPEQFYATRDHYFTSYFLVLLEMILDPHWTSVVFYSPKEVKVVAQGFSSANGITVSLDQKFVYVADVTAKNIHIMKKHDNWDLTPVKVIQLGTLVDNLTVDPATGDILAGCHPNPMKLLIYNPEDPPGSEVLRIQDSLSDKPRVSTLYANNGSVLQGSTVASVYHKRMLIGTIFHKALYCDL.

Cysteine 42 and cysteine 352 are joined by a disulfide. Asparagine 50 carries N-linked (GlcNAc...) asparagine glycosylation. Positions 53 and 54 each coordinate Ca(2+). The active-site Proton acceptor is histidine 114. Isoleucine 116 is a binding site for Ca(2+). At serine 165 the chain carries Phosphoserine. The Ca(2+) site is built by asparagine 167, aspartate 168, asparagine 223, aspartate 268, and asparagine 269. Residues asparagine 269 and asparagine 323 are each glycosylated (N-linked (GlcNAc...) asparagine).

The protein belongs to the paraoxonase family. Homodimer. Requires Ca(2+) as cofactor. Post-translationally, glycosylated. The signal sequence is not cleaved.

It is found in the secreted. Its subcellular location is the extracellular space. It catalyses the reaction a phenyl acetate + H2O = a phenol + acetate + H(+). The enzyme catalyses An aryl dialkyl phosphate + H2O = dialkyl phosphate + an aryl alcohol.. It carries out the reaction an N-acyl-L-homoserine lactone + H2O = an N-acyl-L-homoserine + H(+). Its function is as follows. Has low activity towards the organophosphate paraxon and aromatic carboxylic acid esters. Rapidly hydrolyzes lactones such as statin prodrugs (e.g. lovastatin). Hydrolyzes aromatic lactones and 5- or 6-member ring lactones with aliphatic substituents but not simple lactones or those with polar substituents. This Mus musculus (Mouse) protein is Serum paraoxonase/lactonase 3 (Pon3).